The sequence spans 734 residues: Adhesion G protein-coupled receptor E5 (734 aa).

The first 26 residues, 1–26, serve as a signal peptide directing secretion; sequence MGGPHGGPFLLFHVLCFLLTLSEVGS. The Extracellular portion of the chain corresponds to 27-449; it reads QNSKACALPC…VEDPKLALIT (423 aa). Positions 28-70 constitute an EGF-like 1 domain; the sequence is NSKACALPCPPNSSCVNGTACRCAPGFISFSGEIFTDPLESCD. 9 disulfides stabilise this stretch: Cys32/Cys42, Cys36/Cys48, Cys50/Cys69, Cys75/Cys89, Cys83/Cys98, Cys100/Cys121, Cys127/Cys140, Cys134/Cys149, and Cys151/Cys170. N-linked (GlcNAc...) asparagine glycans are attached at residues Asn39 and Asn44. The EGF-like 2; calcium-binding domain occupies 71 to 122; the sequence is DINECGPPSPVDCGSSADCQNTEGGYYCTCSPGYEPVSGAMIFRNESENTCR. Asn115 and Asn136 each carry an N-linked (GlcNAc...) asparagine glycan. Positions 123–171 constitute an EGF-like 3; calcium-binding domain; it reads DVDECSSGQHQCHNSTVCFNTVGSYTCHCREGWEPKHGLKNKQKDTICK. A GAIN-B domain is found at 265-441; that stretch reads TYRSLDNTEL…AILMAHYDVE (177 aa). N-linked (GlcNAc...) asparagine glycans are attached at residues Asn285, Asn327, Asn372, Asn403, and Asn418. 2 disulfide bridges follow: Cys393–Cys423 and Cys411–Cys425. The GPS stretch occupies residues 393-441; that stretch reads CAFWKKDSNGNGSWATTGCWKMGRGNGSITCQCSHLSSFAILMAHYDVE. The chain crosses the membrane as a helical span at residues 450 to 470; it reads KVGLALSLACLLLCILTFLLV. Residues 471-478 are Cytoplasmic-facing; the sequence is RPIQGSRT. A helical transmembrane segment spans residues 479–499; that stretch reads TVHLHLCICLFVGSAIFLAGI. Residues 500–519 lie on the Extracellular side of the membrane; it reads ENEGGEVGTRCRLVAVLLHY. The chain crosses the membrane as a helical span at residues 520-540; it reads CFLAAFCWMSLEGVELYFLVV. The Cytoplasmic segment spans residues 541–550; it reads RVFQGQGMRK. The chain crosses the membrane as a helical span at residues 551 to 571; it reads LWLCLIGYGVPLIIVGISAGA. Residues 572-593 lie on the Extracellular side of the membrane; it reads YSKGYGREKFCWLNFEGGFLWS. A helical membrane pass occupies residues 594 to 614; sequence FVGPVTFIVLGNAIIFVITVW. The Cytoplasmic portion of the chain corresponds to 615–637; that stretch reads KLTQKFSEINPDIKKLKKARVLT. Residues 638-658 form a helical membrane-spanning segment; the sequence is ITAIAQLFVLGCTWVFGLLLF. Topologically, residues 659 to 662 are extracellular; sequence NPES. Residues 663–683 traverse the membrane as a helical segment; the sequence is WVLSYIFSILNCLQGFFLFVL. Residues 684-734 are Cytoplasmic-facing; the sequence is YCLLNKKVREEYRKWACMVAGNKYSEFATTTSGSGSSHNQTQALRPSESGM. Positions 712–734 are disordered; the sequence is TTTSGSGSSHNQTQALRPSESGM. Residue Thr713 is modified to Phosphothreonine. Ser715 bears the Phosphoserine mark. Position 724 is a phosphothreonine (Thr724). 2 positions are modified to phosphoserine: Ser730 and Ser732.

It belongs to the G-protein coupled receptor 2 family. LN-TM7 subfamily. Forms a heterodimer, consisting of a large extracellular region (alpha subunit) non-covalently linked to a seven-transmembrane moiety (beta subunit). Interacts with complement decay-accelerating factor (DAF) and with chondroitin sulfate. Post-translationally, proteolytically cleaved into 2 subunits, an extracellular alpha subunit and a seven-transmembrane subunit.

It localises to the cell membrane. The protein localises to the secreted. The protein resides in the extracellular space. Its function is as follows. Receptor potentially involved in both adhesion and signaling processes early after leukocyte activation. Plays an essential role in leukocyte migration. The chain is Adhesion G protein-coupled receptor E5 from Bos taurus (Bovine).